The chain runs to 424 residues: MSFTQPNLLFPPTVLSVGGLTQYIQTLLEQDEELMQVWVTGEVSSASQHRSGLFFTLQDPDERVALRCIVWASQLEKLSILPVPGEQVILLGRIRVYPQRGEYQLMVWQALPAGEGLMALRYRQLRDRLETEGLFDPARKRPLPPHPQTIAVVTSPQAAAWGDIQRTLSHRYPGLRVLLSPALVQGDQAPDSIVAAIERVEKDGRAEVLILSRGGGATEDMACFNHERVVRAIAECSIPVIAGIGHQRDESLADLVADVHVHTPTAAAQLAVPDLAELYTEHCQRLDHLITAGQTRLALAQNQLQHQNRRLKRLPLERQLVQEGRAIAHLKQQLIQTVSQQLQQRLTHQQLLAQKLQSLDPRAILQRGYAIARRQNGQILRTIAALQEGDDLTLQLSDGQVKVQVRKIMAAGTGHEAESEQMEL.

The protein belongs to the XseA family. Heterooligomer composed of large and small subunits.

The protein resides in the cytoplasm. It carries out the reaction Exonucleolytic cleavage in either 5'- to 3'- or 3'- to 5'-direction to yield nucleoside 5'-phosphates.. Functionally, bidirectionally degrades single-stranded DNA into large acid-insoluble oligonucleotides, which are then degraded further into small acid-soluble oligonucleotides. This Cyanothece sp. (strain PCC 7425 / ATCC 29141) protein is Exodeoxyribonuclease 7 large subunit.